Reading from the N-terminus, the 348-residue chain is Uroporphyrinogen decarboxylase (348 aa).

Residues 27–31, Phe46, Asp76, Tyr152, Ser207, and His320 each bind substrate; that span reads RQAGR.

This sequence belongs to the uroporphyrinogen decarboxylase family. In terms of assembly, homodimer.

It is found in the cytoplasm. The enzyme catalyses uroporphyrinogen III + 4 H(+) = coproporphyrinogen III + 4 CO2. Its pathway is porphyrin-containing compound metabolism; protoporphyrin-IX biosynthesis; coproporphyrinogen-III from 5-aminolevulinate: step 4/4. Functionally, catalyzes the decarboxylation of four acetate groups of uroporphyrinogen-III to yield coproporphyrinogen-III. This Bacillus cereus (strain B4264) protein is Uroporphyrinogen decarboxylase.